Here is a 468-residue protein sequence, read N- to C-terminus: UDP-N-acetylmuramate--L-alanine ligase (468 aa).

112–118 lines the ATP pocket; that stretch reads GTHGKTT.

This sequence belongs to the MurCDEF family.

It is found in the cytoplasm. The catalysed reaction is UDP-N-acetyl-alpha-D-muramate + L-alanine + ATP = UDP-N-acetyl-alpha-D-muramoyl-L-alanine + ADP + phosphate + H(+). Its pathway is cell wall biogenesis; peptidoglycan biosynthesis. Cell wall formation. This is UDP-N-acetylmuramate--L-alanine ligase from Neisseria meningitidis serogroup C (strain 053442).